Reading from the N-terminus, the 159-residue chain is Small ribosomal subunit protein uS19 (159 aa).

This sequence belongs to the universal ribosomal protein uS19 family.

Protein S19 forms a complex with S13 that binds strongly to the 16S ribosomal RNA. The chain is Small ribosomal subunit protein uS19 from Pyrobaculum arsenaticum (strain DSM 13514 / JCM 11321 / PZ6).